The following is a 262-amino-acid chain: Acyl-[acyl-carrier-protein]--UDP-N-acetylglucosamine O-acyltransferase (262 aa).

Belongs to the transferase hexapeptide repeat family. LpxA subfamily. Homotrimer.

The protein localises to the cytoplasm. The enzyme catalyses a (3R)-hydroxyacyl-[ACP] + UDP-N-acetyl-alpha-D-glucosamine = a UDP-3-O-[(3R)-3-hydroxyacyl]-N-acetyl-alpha-D-glucosamine + holo-[ACP]. It participates in glycolipid biosynthesis; lipid IV(A) biosynthesis; lipid IV(A) from (3R)-3-hydroxytetradecanoyl-[acyl-carrier-protein] and UDP-N-acetyl-alpha-D-glucosamine: step 1/6. Its function is as follows. Involved in the biosynthesis of lipid A, a phosphorylated glycolipid that anchors the lipopolysaccharide to the outer membrane of the cell. This chain is Acyl-[acyl-carrier-protein]--UDP-N-acetylglucosamine O-acyltransferase, found in Salmonella paratyphi B (strain ATCC BAA-1250 / SPB7).